Reading from the N-terminus, the 429-residue chain is Cyclin-B2-1 (429 aa).

Belongs to the cyclin family. Cyclin AB subfamily. As to quaternary structure, interacts with CDC20-1 and CDC20-2. In terms of tissue distribution, expressed in roots, stems, leaves, flowers and siliques.

This chain is Cyclin-B2-1 (CYCB2-1), found in Arabidopsis thaliana (Mouse-ear cress).